A 73-amino-acid chain; its full sequence is UPF0435 protein lin1819 (73 aa).

It belongs to the UPF0435 family.

In Listeria innocua serovar 6a (strain ATCC BAA-680 / CLIP 11262), this protein is UPF0435 protein lin1819.